The following is a 215-amino-acid chain: Thiamine import ATP-binding protein ThiQ (215 aa).

An ABC transporter domain is found at 2–215 (IYLNNVILND…GQISQLQKGV (214 aa)). Position 32–39 (32–39 (GESGAGKS)) interacts with ATP.

This sequence belongs to the ABC transporter superfamily. Thiamine importer (TC 3.A.1.19.1) family. In terms of assembly, the complex is composed of two ATP-binding proteins (ThiQ), two transmembrane proteins (ThiP) and a solute-binding protein (ThiB).

It is found in the cell inner membrane. It catalyses the reaction thiamine(out) + ATP + H2O = thiamine(in) + ADP + phosphate + H(+). Functionally, part of the ABC transporter complex ThiBPQ involved in thiamine import. Responsible for energy coupling to the transport system. This Haemophilus influenzae (strain 86-028NP) protein is Thiamine import ATP-binding protein ThiQ.